Consider the following 213-residue polypeptide: Ras-related protein Rab-39B (213 aa).

GTP is bound by residues Ser-17, Gly-20, Lys-21, Ser-22, Cys-23, Ser-37, and Thr-40. Ser-22 is a binding site for Mg(2+). The segment at 35–43 is switch-I; that stretch reads QVSDPTVGV. Residues Thr-40 and Asp-64 each coordinate Mg(2+). Residues Gly-67, His-123, Lys-124, Asp-126, Ala-154, and Arg-155 each contribute to the GTP site. Residues 67–83 are switch-II; it reads GQERFRSITRAYYRNSV. Ser-201 is subject to Phosphoserine. S-geranylgeranyl cysteine attachment occurs at residues Cys-211 and Cys-213. A Cysteine methyl ester modification is found at Cys-213.

It belongs to the small GTPase superfamily. Rab family. As to quaternary structure, interacts (GDP-bound) with C9orf72; C9orf72 in complex with SMCR8 acts as a GEF for RAB39B. Interacts (in GTP-bound form) with PICK1 (via PDZ domain); a PICK1 homodimer may allow simultaneous association of RAB39B and GRIA2 to PICK1 which is involved in GRIA2 trafficking. Interacts with isoform c of RASSF1; the interaction is strong. Interacts with isoform a of RASSF1; the interaction is weak. Interacts with the DLG4/PSD-95. Interacts (GTP-bound) with HOPS complex components VPS39 and VPS41. Mg(2+) serves as cofactor. Specifically expressed in neuron and neuronal precursors in the brain. Expression is high in all regions of the brain with highest levels observed in the hippocampus.

It localises to the cell membrane. The protein resides in the cytoplasmic vesicle membrane. It is found in the golgi apparatus. The protein localises to the cytoplasmic vesicle. Its subcellular location is the autophagosome membrane. It localises to the autolysosome membrane. It catalyses the reaction GTP + H2O = GDP + phosphate + H(+). Regulated by guanine nucleotide exchange factors (GEFs) including C9orf72-SMCR8 complex, which promote the exchange of bound GDP for free GTP. Regulated by GTPase activating proteins (GAPs) which increase the GTP hydrolysis activity. Inhibited by GDP dissociation inhibitors (GDIs). Functionally, the small GTPases Rab are key regulators of intracellular membrane trafficking, from the formation of transport vesicles to their fusion with membranes. Rabs cycle between an inactive GDP-bound form and an active GTP-bound form that is able to recruit to membranes different sets of downstream effectors directly responsible for vesicle formation, movement, tethering and fusion. RAB39B is involved in autophagy and may function in autophagosome formation. Binds downstream effector PICK1 to ensure selectively GRIA2 exit from the endoplasmic reticulum to the Golgi and to regulate AMPAR composition at the post-synapses and thus synaptic transmission. May regulate the homeostasis of SNCA/alpha-synuclein. This Mus musculus (Mouse) protein is Ras-related protein Rab-39B.